A 504-amino-acid polypeptide reads, in one-letter code: 2,3-bisphosphoglycerate-independent phosphoglycerate mutase (504 aa).

Mn(2+) contacts are provided by D11 and S61. The Phosphoserine intermediate role is filled by S61. Substrate is bound by residues H122, 152–153, R183, R189, 255–258, and K329; these read RD and RNDR. Positions 396, 400, 437, 438, and 455 each coordinate Mn(2+).

This sequence belongs to the BPG-independent phosphoglycerate mutase family. In terms of assembly, monomer. Mn(2+) is required as a cofactor.

The enzyme catalyses (2R)-2-phosphoglycerate = (2R)-3-phosphoglycerate. The protein operates within carbohydrate degradation; glycolysis; pyruvate from D-glyceraldehyde 3-phosphate: step 3/5. Catalyzes the interconversion of 2-phosphoglycerate and 3-phosphoglycerate. The protein is 2,3-bisphosphoglycerate-independent phosphoglycerate mutase of Bacteroides fragilis (strain YCH46).